The primary structure comprises 398 residues: L-methionine gamma-lyase (398 aa).

Pyridoxal 5'-phosphate contacts are provided by residues 59–61 and 89–90; these read YSR and GM. Tyrosine 114 is a substrate binding site. Pyridoxal 5'-phosphate is bound at residue 208 to 210; that stretch reads SAT. Lysine 211 is modified (N6-(pyridoxal phosphate)lysine). Arginine 375 is a substrate binding site.

This sequence belongs to the trans-sulfuration enzymes family. L-methionine gamma-lyase subfamily. Homotetramer; dimer of active dimers. Requires pyridoxal 5'-phosphate as cofactor.

The catalysed reaction is L-methionine + H2O = methanethiol + 2-oxobutanoate + NH4(+). It catalyses the reaction L-homocysteine + H2O = 2-oxobutanoate + hydrogen sulfide + NH4(+) + H(+). Its activity is regulated as follows. Irreversibly inactivated by DL-propargylglycine. In terms of biological role, catalyzes the alpha,gamma-elimination of L-methionine to produce methanethiol, 2-oxobutanoate and ammonia. Is involved in L-methionine catabolism. In fact, shows a multicatalytic function since it also catalyzes gamma-replacement of L-methionine with thiol compounds, alpha,gamma-elimination and gamma-replacement reactions of L-homocysteine and its S-substituted derivatives, O-substituted-L-homoserines and DL-selenomethionine, and, to a lesser extent, alpha,beta-elimination and beta-replacement reactions of L-cysteine, S-methyl-L-cysteine, and O-acetyl-L-serine. Also catalyzes deamination and gamma-addition reactions of L-vinylglycine. Thus, the enzyme is able to cleave C-S, C-Se, and C-O bonds of sulfur, selenium, and oxygen amino acids, respectively. The polypeptide is L-methionine gamma-lyase (Pseudomonas putida (Arthrobacter siderocapsulatus)).